A 201-amino-acid polypeptide reads, in one-letter code: dITP/XTP pyrophosphatase (201 aa).

A substrate-binding site is contributed by 8–13; that stretch reads SNNPGK. Residues Glu-40 and Asp-69 each coordinate Mg(2+). Asp-69 functions as the Proton acceptor in the catalytic mechanism. Residues Ser-70, 155–158, Lys-178, and 183–184 contribute to the substrate site; these read FGYD and HR.

It belongs to the HAM1 NTPase family. In terms of assembly, homodimer. Requires Mg(2+) as cofactor.

It carries out the reaction XTP + H2O = XMP + diphosphate + H(+). The enzyme catalyses dITP + H2O = dIMP + diphosphate + H(+). The catalysed reaction is ITP + H2O = IMP + diphosphate + H(+). Functionally, pyrophosphatase that catalyzes the hydrolysis of nucleoside triphosphates to their monophosphate derivatives, with a high preference for the non-canonical purine nucleotides XTP (xanthosine triphosphate), dITP (deoxyinosine triphosphate) and ITP. Seems to function as a house-cleaning enzyme that removes non-canonical purine nucleotides from the nucleotide pool, thus preventing their incorporation into DNA/RNA and avoiding chromosomal lesions. This Ralstonia nicotianae (strain ATCC BAA-1114 / GMI1000) (Ralstonia solanacearum) protein is dITP/XTP pyrophosphatase.